A 378-amino-acid polypeptide reads, in one-letter code: Heme chaperone HemW (378 aa).

In terms of domain architecture, Radical SAM core spans 1–237 (MVKLPPLSLY…LTAAGYQQYE (237 aa)). Tyr-10 contacts S-adenosyl-L-methionine. Cys-16, Cys-20, and Cys-23 together coordinate [4Fe-4S] cluster. Residues Gly-66, 67–68 (GT), Glu-99, Gln-126, Arg-138, and Asp-163 contribute to the S-adenosyl-L-methionine site.

It belongs to the anaerobic coproporphyrinogen-III oxidase family. HemW subfamily. As to quaternary structure, binding of the [4Fe-4S] cofactor promotes dimerization. [4Fe-4S] cluster is required as a cofactor.

Its subcellular location is the cytoplasm. In terms of biological role, probably acts as a heme chaperone, transferring heme to the NarI subunit of the respiratory enzyme nitrate reductase; transfer may be stimulated by NADH. Binds one molecule of heme per monomer, possibly covalently. Heme binding is not affected by either [4Fe-4S] or S-adenosyl-L-methionine (SAM)-binding. Does not have coproporphyrinogen III dehydrogenase activity in vitro. Binds 1 [4Fe-4S] cluster. The cluster is coordinated with 3 cysteines and an exchangeable S-adenosyl-L-methionine. This Escherichia coli (strain K12) protein is Heme chaperone HemW.